We begin with the raw amino-acid sequence, 334 residues long: Protein CapI (334 aa).

Ser126 is a binding site for substrate. The active-site Proton acceptor is Tyr151.

It belongs to the NAD(P)-dependent epimerase/dehydratase family.

The protein operates within capsule biogenesis; capsule polysaccharide biosynthesis. In terms of biological role, required for the biosynthesis of type 1 capsular polysaccharide. This Staphylococcus aureus protein is Protein CapI (capI).